We begin with the raw amino-acid sequence, 121 residues long: Large ribosomal subunit protein bL20 (121 aa).

The protein belongs to the bacterial ribosomal protein bL20 family.

Binds directly to 23S ribosomal RNA and is necessary for the in vitro assembly process of the 50S ribosomal subunit. It is not involved in the protein synthesizing functions of that subunit. In Polynucleobacter necessarius subsp. necessarius (strain STIR1), this protein is Large ribosomal subunit protein bL20.